A 1049-amino-acid polypeptide reads, in one-letter code: Multidrug efflux pump subunit AcrB (1049 aa).

The Cytoplasmic segment spans residues 1 to 9 (MPNFFIDRP). Residues 10–28 (IFAWVIAIIIMLAGGLAIL) form a helical membrane-spanning segment. Over 29-336 (KLPVAQYPTI…YDTTPFVKIS (308 aa)) the chain is Periplasmic. Residues 337–356 (IHEVVKTLVEAIILVFLVMY) form a helical membrane-spanning segment. Over 357–365 (LFLQNFRAT) the chain is Cytoplasmic. The helical transmembrane segment at 366–385 (LIPTIAVPVVLLGTFAVLAA) threads the bilayer. The Periplasmic segment spans residues 386–391 (FGFSIN). A helical transmembrane segment spans residues 392–413 (TLTMFGMVLAIGLLVDDAIVVV). At 414–438 (ENVERVMAEEGLPPKEATRKSMGQI) the chain is on the cytoplasmic side. A helical transmembrane segment spans residues 439–457 (QGALVGIAMVLSAVFVPMA). Residues 458–465 (FFGGSTGA) are Periplasmic-facing. The helical transmembrane segment at 466-490 (IYRQFSITIVSAMALSVLVALILTP) threads the bilayer. The Cytoplasmic portion of the chain corresponds to 491-538 (ALCATMLKPIAKGDHGEGKKGFFGWFNRMFEKSTHHYTDSVGGILRST). Residues 539–555 (GRYLVLYLIIVVGMAYL) form a helical membrane-spanning segment. Over 556–871 (FVRLPSSFLP…MSYQERLSGN (316 aa)) the chain is Periplasmic. Residues 872–888 (QAPSLYAISLIVVFLCL) form a helical membrane-spanning segment. The Cytoplasmic segment spans residues 889-898 (AALYESWSIP). Residues 899–918 (FSVMLVVPLGVIGALLAATF) form a helical membrane-spanning segment. Over 919–924 (RGLTND) the chain is Periplasmic. Residues 925-943 (VYFQVGLLTTIGLSAKNAI) traverse the membrane as a helical segment. The Cytoplasmic portion of the chain corresponds to 944-972 (LIVEFAKDLMDKEGKGLIEATLDAVRMRL). A helical transmembrane segment spans residues 973–992 (RPILMTSLAFILGVMPLVIS). The Periplasmic segment spans residues 993–998 (TGAGSG). A helical membrane pass occupies residues 999-1018 (AQNAVGTGVMGGMVTATVLA). Residues 1019-1049 (IFFVPVFFVVVRRRFSRKNEDIEHSHTVDHH) lie on the Cytoplasmic side of the membrane.

It belongs to the resistance-nodulation-cell division (RND) (TC 2.A.6) family. Homotrimer, with large domains that extend into the periplasm, interacts with AcrA and TolC. AcrA may be required to stably link this protein and TolC. Interacts with AcrZ. Part of the AcrA-AcrB-AcrZ-TolC efflux pump.

The protein localises to the cell inner membrane. AcrA-AcrB-AcrZ-TolC is a drug efflux protein complex with broad substrate specificity that uses the proton motive force to export substrates. In terms of biological role, (Microbial infection) Involved in contact-dependent growth inhibition (CDI), acts downstream of BamA, the receptor for CDI. Its role in CDI is independent of the AcrA-AcrB-TolC efflux pump complex. In Escherichia coli (strain K12), this protein is Multidrug efflux pump subunit AcrB (acrB).